Consider the following 538-residue polypeptide: Phosphatidylethanolamine transferase Mcr-2 (538 aa).

A run of 5 helical transmembrane segments spans residues 14–34, 47–67, 72–92, 121–141, and 161–181; these read PFVLMGLVALFLAATANLTFF, LGFIISMAVAVMGAMLLIVVL, YVLKPVLILLLIMGAVTSYFT, LAFFVRIIGLGVLPSVLVAVA, and VSLVLLLVPIGLFSSQYASFF. Residues glutamate 244 and threonine 283 each contribute to the Zn(2+) site. 3 disulfides stabilise this stretch: cysteine 279/cysteine 289, cysteine 354/cysteine 362, and cysteine 412/cysteine 420. Threonine 283 is modified (phosphothreonine). Zn(2+) is bound by residues aspartate 463 and histidine 464.

Belongs to the phosphoethanolamine transferase family. As to quaternary structure, monomer. In terms of processing, phosphorylated at Thr-283; may represent an intermediate in the catalytic mechanism.

Its subcellular location is the cell inner membrane. The catalysed reaction is lipid A (E. coli) + a 1,2-diacyl-sn-glycero-3-phosphoethanolamine + H(+) = lipid A 4'-(2-aminoethyl diphosphate) (E. coli) + a 1,2-diacyl-sn-glycerol. Its function is as follows. Probably catalyzes the addition of a phosphoethanolamine moiety to lipid A. Phosphoethanolamine modification of lipid A confers polymyxin resistance. Confers resistance to polymyxin-type antibiotics such as colistin. This chain is Phosphatidylethanolamine transferase Mcr-2, found in Escherichia coli.